Consider the following 524-residue polypeptide: Acetyl-CoA hydrolase (524 aa).

279 to 283 contributes to the CoA binding site; the sequence is GIGNI. The active-site 5-glutamyl coenzyme A thioester intermediate is the Glu-304. Gly-398 contacts CoA.

Belongs to the acetyl-CoA hydrolase/transferase family.

It is found in the cytoplasm. The catalysed reaction is acetyl-CoA + H2O = acetate + CoA + H(+). In terms of biological role, presumably involved in regulating the intracellular acetyl-CoA pool for fatty acid and cholesterol synthesis and fatty acid oxidation. The protein is Acetyl-CoA hydrolase (ACH1) of Yarrowia lipolytica (strain CLIB 122 / E 150) (Yeast).